The chain runs to 82 residues: DNA-directed RNA polymerase subunit omega (82 aa).

This sequence belongs to the RNA polymerase subunit omega family. In terms of assembly, the RNAP catalytic core consists of 2 alpha, 1 beta, 1 beta' and 1 omega subunit. When a sigma factor is associated with the core the holoenzyme is formed, which can initiate transcription.

It carries out the reaction RNA(n) + a ribonucleoside 5'-triphosphate = RNA(n+1) + diphosphate. In terms of biological role, promotes RNA polymerase assembly. Latches the N- and C-terminal regions of the beta' subunit thereby facilitating its interaction with the beta and alpha subunits. The protein is DNA-directed RNA polymerase subunit omega of Lacticaseibacillus casei (strain BL23) (Lactobacillus casei).